A 485-amino-acid polypeptide reads, in one-letter code: MTITPQNLIALLPLLIVGLTVVVVMLSIAWRRNHFLNATLSVIGLNAALVSLWFVGQAGAMDVTPLMRVDGFAMLYTGLVLLASLATCTFAYPWLEGYNDNKDEFYLLVLIAALGGILLANANHLASLFLGIELISLPLFGLVGYAFRQKRSLEASIKYTILSAAASSFLLFGMALVYAQSGDLSFVALGKNLGDGMLNEPLLLAGFGMMIVGLGFKLSLVPFHLWTPDVYQGAPAPVSTFLATASKIAIFGVVMRLFLYAPVGDSEAIRVVLAIIAFASIIFGNLMALSQTNIKRLLGYSSISHLGYLLVALIALQTGEMSMEAVGVYLAGYLFSSLGAFGVVSLMSSPYRGPDADSLFSYRGLFWHRPILAAVMTVMMLSLAGIPMTLGFIGKFYVLAVGVQAHLWWLVGAVVVGSAIGLYYYLRVAVSLYLHAPEQPGRDAPSNWQYSAGGIVVLISALLVLVLGVWPQSLISIVRLAMPLM.

The next 14 helical transmembrane spans lie at 8–28 (LIALLPLLIVGLTVVVVMLSI), 35–55 (FLNATLSVIGLNAALVSLWFV), 71–91 (GFAMLYTGLVLLASLATCTFA), 105–125 (FYLLVLIAALGGILLANANHL), 127–147 (SLFLGIELISLPLFGLVGYAF), 159–179 (YTILSAAASSFLLFGMALVYA), 203–223 (LLAGFGMMIVGLGFKLSLVPF), 235–255 (PAPVSTFLATASKIAIFGVVM), 271–291 (VVLAIIAFASIIFGNLMALSQ), 297–317 (LLGYSSISHLGYLLVALIALQ), 326–346 (VGVYLAGYLFSSLGAFGVVSL), 373–393 (AAVMTVMMLSLAGIPMTLGFI), 408–430 (WWLVGAVVVGSAIGLYYYLRVAV), and 450–470 (YSAGGIVVLISALLVLVLGVW).

It belongs to the complex I subunit 2 family. In terms of assembly, NDH-1 is composed of 13 different subunits. Subunits NuoA, H, J, K, L, M, N constitute the membrane sector of the complex.

The protein resides in the cell inner membrane. It carries out the reaction a quinone + NADH + 5 H(+)(in) = a quinol + NAD(+) + 4 H(+)(out). Its function is as follows. NDH-1 shuttles electrons from NADH, via FMN and iron-sulfur (Fe-S) centers, to quinones in the respiratory chain. The immediate electron acceptor for the enzyme in this species is believed to be ubiquinone. Couples the redox reaction to proton translocation (for every two electrons transferred, four hydrogen ions are translocated across the cytoplasmic membrane), and thus conserves the redox energy in a proton gradient. This Shigella boydii serotype 4 (strain Sb227) protein is NADH-quinone oxidoreductase subunit N.